We begin with the raw amino-acid sequence, 92 residues long: YcgL domain-containing protein Sfri_1738 (92 aa).

A YcgL domain is found at 1-85 (MICAVYKSGR…PQINLLEQHK (85 aa)).

The chain is YcgL domain-containing protein Sfri_1738 from Shewanella frigidimarina (strain NCIMB 400).